Consider the following 359-residue polypeptide: Alanine racemase, biosynthetic (359 aa).

The Proton acceptor; specific for D-alanine role is filled by K34. K34 bears the N6-(pyridoxal phosphate)lysine mark. Residue R129 coordinates substrate. Y255 serves as the catalytic Proton acceptor; specific for L-alanine. M303 contributes to the substrate binding site.

The protein belongs to the alanine racemase family. It depends on pyridoxal 5'-phosphate as a cofactor.

The catalysed reaction is L-alanine = D-alanine. The protein operates within amino-acid biosynthesis; D-alanine biosynthesis; D-alanine from L-alanine: step 1/1. It participates in cell wall biogenesis; peptidoglycan biosynthesis. Its function is as follows. Catalyzes the interconversion of L-alanine and D-alanine. Provides the D-alanine required for cell wall biosynthesis. This is Alanine racemase, biosynthetic (alr) from Escherichia coli O157:H7.